Consider the following 156-residue polypeptide: Transcriptional repressor NrdR (156 aa).

Residues 3 to 34 (CPKCSSTHSRVVDSRHADDANAIRRRRECENC) fold into a zinc finger. The ATP-cone domain maps to 49 to 139 (LIVVKKDGTR…VYKEFKDVDQ (91 aa)).

This sequence belongs to the NrdR family. The cofactor is Zn(2+).

In terms of biological role, negatively regulates transcription of bacterial ribonucleotide reductase nrd genes and operons by binding to NrdR-boxes. This Staphylococcus haemolyticus (strain JCSC1435) protein is Transcriptional repressor NrdR.